Consider the following 304-residue polypeptide: Ribonuclease Z (304 aa).

Residues H63, H65, D67, H68, H141, D208, and H266 each coordinate Zn(2+). The Proton acceptor role is filled by D67.

This sequence belongs to the RNase Z family. Homodimer. Requires Zn(2+) as cofactor.

It carries out the reaction Endonucleolytic cleavage of RNA, removing extra 3' nucleotides from tRNA precursor, generating 3' termini of tRNAs. A 3'-hydroxy group is left at the tRNA terminus and a 5'-phosphoryl group is left at the trailer molecule.. Its function is as follows. Zinc phosphodiesterase, which displays some tRNA 3'-processing endonuclease activity. Probably involved in tRNA maturation, by removing a 3'-trailer from precursor tRNA. The polypeptide is Ribonuclease Z (Chlamydia muridarum (strain MoPn / Nigg)).